The chain runs to 173 residues: Ribosome maturation factor RimM (173 aa).

The PRC barrel domain maps to 95–169 (EGSYYFKDIL…RIEVTLLEGL (75 aa)).

The protein belongs to the RimM family. As to quaternary structure, binds ribosomal protein uS19.

It localises to the cytoplasm. In terms of biological role, an accessory protein needed during the final step in the assembly of 30S ribosomal subunit, possibly for assembly of the head region. Essential for efficient processing of 16S rRNA. May be needed both before and after RbfA during the maturation of 16S rRNA. It has affinity for free ribosomal 30S subunits but not for 70S ribosomes. In Lactobacillus johnsonii (strain CNCM I-12250 / La1 / NCC 533), this protein is Ribosome maturation factor RimM.